Reading from the N-terminus, the 349-residue chain is uncharacterized protein (349 aa).

Positions 51-160 constitute a THUMP domain; that stretch reads NIIKENKNNL…QDESYISIFQ (110 aa).

This is an uncharacterized protein from Methanocaldococcus jannaschii (strain ATCC 43067 / DSM 2661 / JAL-1 / JCM 10045 / NBRC 100440) (Methanococcus jannaschii).